The sequence spans 275 residues: Low affinity immunoglobulin gamma Fc region receptor III-A (275 aa).

Residues 1–23 form the signal peptide; sequence MSVWTSRKAAEDNDTSLSSGIRA. Residues 24 to 207 are Extracellular-facing; that stretch reads GLQKAVVTLH…SPSTFPPWHQ (184 aa). Ig-like C2-type domains lie at 28–92 and 101–192; these read AVVT…YTCQ and PVNL…LRIT. Intrachain disulfides connect Cys-49/Cys-91 and Cys-131/Cys-175. Asn-65, Asn-168, and Asn-183 each carry an N-linked (GlcNAc...) asparagine glycan. A helical transmembrane segment spans residues 208–228; that stretch reads ITFCLLIGLLFTIDTVMYFSV. The Cytoplasmic segment spans residues 229 to 275; the sequence is QKGLRRSTADYEEPEVHWSKEPENKTISEEKQSFRSSRANSETPENR. The tract at residues 237-275 is disordered; that stretch reads ADYEEPEVHWSKEPENKTISEEKQSFRSSRANSETPENR. A Phosphotyrosine modification is found at Tyr-239. A compositionally biased stretch (basic and acidic residues) spans 242–261; sequence PEVHWSKEPENKTISEEKQS. Over residues 262-275 the composition is skewed to polar residues; that stretch reads FRSSRANSETPENR.

Forms a heterooligomeric complex with ITAM-containing signaling subunits FCER1G. Interacts (via transmembrane domain) with signaling subunits; this interaction is a prerequisite for receptor complex expression on the cell surface and intracellular signal transduction. Binds the Fc region of antigen-complexed IgG. N-glycosylated. In terms of processing, phosphorylated following receptor ligation.

The protein localises to the cell membrane. Its function is as follows. Receptor for the invariable Fc fragment of immunoglobulin gamma (IgG). Binds with intermediate affinity to both IgG2a and IgG2b. Can bind to IgG2a and IgG2b monomers. Does not display binding to IgG1 or IgG3. Recognizes neutralizing virus-specific IgGs displayed on the cell surface of infected cells and triggers antibody-dependent cellular cytotoxicity (ADCC). Confers protection to lethal influenza virus infection. On splenic dendritic cells, uptakes antigen immune complexes and efficiently divert them into MHC class I and II antigen presentation pathways to provide for superior priming of CD4-positive and CD8-positive T cell immune responses. Mediates neutrophil activation by IgG complexes redundantly with FCGR2A. Plays a role in promoting bone resorption by enhancing osteoclast differentiation following binding to IgG2a. Also acts as a receptor for the Fc region of immunoglobulin epsilon (IgE). Binds with low affinity to both the a and b allotypes of IgE. Has also been shown to bind to IgE allotype a only but not to allotype b. Binds aggregated IgE but not the monomeric form and bound monomeric IgG is readily displaced by IgE complexes. Binding to IgE promotes macrophage-mediated phagocytosis, antigen presentation to T cells, production of pro-inflammatory cytokines and the late phase of cutaneous allergic reactions. Mediates enhanced ADCC in response to afucosylated IgGs. This is Low affinity immunoglobulin gamma Fc region receptor III-A from Cricetulus griseus (Chinese hamster).